Reading from the N-terminus, the 1081-residue chain is MPRRKQQAPRRAAAYVSEELKAAALVDEGLDPEEHTADGEPSAKYMCPEKELARACPSYQNSPAAEFSCHEMDSESHISETSDRMADFESGSIKNEEETKEVTVPLEDTTVSDSLEQMKAVYNNFLSNSYWSNLNLNLHQPSSEKNNGSSSSSSSSSSSCGSGSFDWHQSAMAKTLQQVSQSRMLPEPSLFSTVQLYRQSSKLYGSIFTGASKFRCKDCSAAYDTLVELTVHMNETGHYRDDNHETDNNNPKRWSKPRKRSLLEMEGKEDAQKVLKCMYCGHSFESLQDLSVHMIKTKHYQKVPLKEPVTPVAAKIIPATRKKASLELELPSSPDSTGGTPKATISDTNDALQKNSNPYITPNNRYGHQNGASYAWHFEARKSQILKCMECGSSHDTLQELTAHMMVTGHFIKVTNSAMKKGKPIVETPVTPTITTLLDEKVQSVPLAATTFTSPSNTPASISPKLNVEVKKEVDKEKAVTDEKPKQKDKPGEEEEKCDISSKYHYLTENDLEESPKGGLDILKSLENTVTSAINKAQNGTPSWGGYPSIHAAYQLPNMMKLSLGSSGKSTPLKPMFGNSEIVSPTKNQTLVSPPSSQTSPMPKTNFHAMEELVKKVTEKVAKVEEKMKEPDGKLSPPKRATPSPCSSEVGEPIKMEASSDGGFRSQENSPSPPRDGCKDGSPLAEPVENGKELVKPLASSLSGSTAIITDHPPEQPFVNPLSALQSVMNIHLGKAAKPSLPALDPMSMLFKMSNSLAEKAAVATPPPLQSKKADHLDRYFYHVNNDQPIDLTKGKSDKGCSLGSVLLSPTSTAPATSSSTVTTAKTSAVVSFMSNSPLRENALSDISDMLKNLTESHTSKSSTPSSISEKSDIDGATLEEAEESTPAQKRKGRQSNWNPQHLLILQAQFAASLRQTSEGKYIMSDLSPQERMHISRFTGLSMTTISHWLANVKYQLRRTGGTKFLKNLDTGHPVFFCNDCASQIRTPSTYISHLESHLGFRLRDLSKLSTEQINSQIAQTKSPSEKMVTSSPEEDLGTSYQCKLCNRTFASKHAVKLHLSKTHGKSPEDHLLYVSELEKQ.

2 disordered regions span residues 141–161 and 238–257; these read PSSE…SSCG and HYRD…WSKP. Low complexity predominate over residues 148 to 161; that stretch reads GSSSSSSSSSSSCG. 2 consecutive C2H2-type zinc fingers follow at residues 214 to 238 and 275 to 299; these read FRCK…ETGH and LKCM…KTKH. The span at 238–247 shows a compositional bias: basic and acidic residues; that stretch reads HYRDDNHETD. The tract at residues 325–364 is disordered; sequence SLELELPSSPDSTGGTPKATISDTNDALQKNSNPYITPNN. Residues 335–364 are compositionally biased toward polar residues; that stretch reads DSTGGTPKATISDTNDALQKNSNPYITPNN. The C2H2-type 3; atypical zinc-finger motif lies at 386–404; the sequence is LKCMECGSSHDTLQELTAH. Basic and acidic residues predominate over residues 473–491; sequence EVDKEKAVTDEKPKQKDKP. Disordered regions lie at residues 473-502, 579-604, 626-687, and 855-897; these read EVDK…DISS, NSEI…PMPK, EKMK…LAEP, and TESH…RQSN. Residues 581–603 show a composition bias toward polar residues; the sequence is EIVSPTKNQTLVSPPSSQTSPMP. Residues 606–630 are a coiled coil; sequence NFHAMEELVKKVTEKVAKVEEKMKE. A Phosphoserine modification is found at Ser-682. Low complexity predominate over residues 856–869; that stretch reads ESHTSKSSTPSSIS. Positions 891 to 961 form a DNA-binding region, homeobox; atypical; that stretch reads RKGRQSNWNP…NVKYQLRRTG (71 aa). C2H2-type zinc fingers lie at residues 976-998 and 1041-1064; these read FFCN…LESH and YQCK…SKTH.

This sequence belongs to the teashirt C2H2-type zinc-finger protein family. In terms of assembly, interacts (via homeobox domain) with APBB1 (via PID domain 1). Interacts (via N-terminus) with HDAC1 and HDAC2; the interaction is direct. Found in a trimeric complex with APBB1 and HDAC1; the interaction between HDAC1 and APBB1 is mediated by TSHZ3. In terms of tissue distribution, expressed in brain; strongly reduced in post-mortem elderly subjects with Alzheimer disease. Expressed in the fetal neocortex.

It is found in the nucleus. The protein resides in the cell projection. The protein localises to the growth cone. Transcriptional regulator involved in developmental processes. Functions in association with APBB1, SET and HDAC factors as a transcriptional repressor, that inhibits the expression of CASP4. TSHZ3-mediated transcription repression involves the recruitment of histone deacetylases HDAC1 and HDAC2. Associates with chromatin in a region surrounding the CASP4 transcriptional start site(s). Regulates the development of neurons involved in both respiratory rhythm and airflow control. Promotes maintenance of nucleus ambiguus (nA) motoneurons, which govern upper airway function, and establishes a respiratory rhythm generator (RRG) activity compatible with survival at birth. Involved in the differentiation of the proximal uretic smooth muscle cells during developmental processes. Involved in the up-regulation of myocardin, that directs the expression of smooth muscle cells in the proximal ureter. Involved in the modulation of glutamatergic synaptic transmission and long-term synaptic potentiation. This is Teashirt homolog 3 (TSHZ3) from Homo sapiens (Human).